A 405-amino-acid chain; its full sequence is Acetate kinase (405 aa).

Asn7 lines the Mg(2+) pocket. Lys14 is an ATP binding site. Position 99 (Arg99) interacts with substrate. Asp156 functions as the Proton donor/acceptor in the catalytic mechanism. Residue 215–219 (HLGNG) participates in ATP binding. Glu391 is a binding site for Mg(2+).

It belongs to the acetokinase family. In terms of assembly, homodimer. The cofactor is Mg(2+). Mn(2+) serves as cofactor.

The protein resides in the cytoplasm. The enzyme catalyses acetate + ATP = acetyl phosphate + ADP. It participates in metabolic intermediate biosynthesis; acetyl-CoA biosynthesis; acetyl-CoA from acetate: step 1/2. In terms of biological role, catalyzes the formation of acetyl phosphate from acetate and ATP. Can also catalyze the reverse reaction. This chain is Acetate kinase, found in Trichormus variabilis (strain ATCC 29413 / PCC 7937) (Anabaena variabilis).